The following is a 380-amino-acid chain: Queuine tRNA-ribosyltransferase (380 aa).

Aspartate 96 acts as the Proton acceptor in catalysis. Substrate is bound by residues 96–100 (DSGGF), aspartate 150, glutamine 193, and glycine 220. The RNA binding stretch occupies residues 251-257 (GVGAPDS). Aspartate 270 (nucleophile) is an active-site residue. The segment at 275–279 (TRIAR) is RNA binding; important for wobble base 34 recognition. Residues cysteine 308, cysteine 310, cysteine 313, and histidine 339 each contribute to the Zn(2+) site.

This sequence belongs to the queuine tRNA-ribosyltransferase family. Homodimer. Within each dimer, one monomer is responsible for RNA recognition and catalysis, while the other monomer binds to the replacement base PreQ1. Requires Zn(2+) as cofactor.

The enzyme catalyses 7-aminomethyl-7-carbaguanine + guanosine(34) in tRNA = 7-aminomethyl-7-carbaguanosine(34) in tRNA + guanine. Its pathway is tRNA modification; tRNA-queuosine biosynthesis. Functionally, catalyzes the base-exchange of a guanine (G) residue with the queuine precursor 7-aminomethyl-7-deazaguanine (PreQ1) at position 34 (anticodon wobble position) in tRNAs with GU(N) anticodons (tRNA-Asp, -Asn, -His and -Tyr). Catalysis occurs through a double-displacement mechanism. The nucleophile active site attacks the C1' of nucleotide 34 to detach the guanine base from the RNA, forming a covalent enzyme-RNA intermediate. The proton acceptor active site deprotonates the incoming PreQ1, allowing a nucleophilic attack on the C1' of the ribose to form the product. After dissociation, two additional enzymatic reactions on the tRNA convert PreQ1 to queuine (Q), resulting in the hypermodified nucleoside queuosine (7-(((4,5-cis-dihydroxy-2-cyclopenten-1-yl)amino)methyl)-7-deazaguanosine). This Streptococcus pneumoniae (strain Taiwan19F-14) protein is Queuine tRNA-ribosyltransferase.